The primary structure comprises 138 residues: Basic phospholipase A2 homolog 7 (138 aa).

Positions 1–16 (MRTLWLMAVLLVGVEG) are cleaved as a signal peptide. Intrachain disulfides connect C42–C131, C44–C60, C59–C111, C65–C138, C66–C104, and C91–C102. Residues 121–133 (KKKKINLKLFCKK) form an important for membrane-damaging activities in eukaryotes and bacteria; heparin-binding region.

This sequence belongs to the phospholipase A2 family. Group II subfamily. K49 sub-subfamily. Expressed by the venom gland.

It localises to the secreted. Snake venom phospholipase A2 homolog that lacks enzymatic activity. Is myotoxic and displays edema-inducing activities. A model of myotoxic mechanism has been proposed: an apo Lys49-PLA2 is activated by the entrance of a hydrophobic molecule (e.g. fatty acid) at the hydrophobic channel of the protein leading to a reorientation of a monomer. This reorientation causes a transition between 'inactive' to 'active' states, causing alignment of C-terminal and membrane-docking sites (MDoS) side-by-side and putting the membrane-disruption sites (MDiS) in the same plane, exposed to solvent and in a symmetric position for both monomers. The MDoS region stabilizes the toxin on membrane by the interaction of charged residues with phospholipid head groups. Subsequently, the MDiS region destabilizes the membrane with penetration of hydrophobic residues. This insertion causes a disorganization of the membrane, allowing an uncontrolled influx of ions (i.e. calcium and sodium), and eventually triggering irreversible intracellular alterations and cell death. The sequence is that of Basic phospholipase A2 homolog 7 from Craspedocephalus gramineus (Bamboo pit viper).